The chain runs to 361 residues: Phospho-N-acetylmuramoyl-pentapeptide-transferase (361 aa).

10 helical membrane-spanning segments follow: residues 26–46 (AILG…VMIR), 73–93 (TMGG…WADL), 97–117 (YVWV…VDDY), 134–154 (YFWQ…TASM), 168–188 (VSLT…IVGS), 200–220 (GLAI…AYLS), 237–257 (TGEL…FLWF), 264–284 (VFMG…VAVI), 289–309 (IVLF…ILQV), and 340–360 (IVRF…SLKI).

The protein belongs to the glycosyltransferase 4 family. MraY subfamily. Mg(2+) is required as a cofactor.

It is found in the cell inner membrane. It carries out the reaction UDP-N-acetyl-alpha-D-muramoyl-L-alanyl-gamma-D-glutamyl-meso-2,6-diaminopimeloyl-D-alanyl-D-alanine + di-trans,octa-cis-undecaprenyl phosphate = di-trans,octa-cis-undecaprenyl diphospho-N-acetyl-alpha-D-muramoyl-L-alanyl-D-glutamyl-meso-2,6-diaminopimeloyl-D-alanyl-D-alanine + UMP. It participates in cell wall biogenesis; peptidoglycan biosynthesis. Its function is as follows. Catalyzes the initial step of the lipid cycle reactions in the biosynthesis of the cell wall peptidoglycan: transfers peptidoglycan precursor phospho-MurNAc-pentapeptide from UDP-MurNAc-pentapeptide onto the lipid carrier undecaprenyl phosphate, yielding undecaprenyl-pyrophosphoryl-MurNAc-pentapeptide, known as lipid I. The polypeptide is Phospho-N-acetylmuramoyl-pentapeptide-transferase (Marinobacter nauticus (strain ATCC 700491 / DSM 11845 / VT8) (Marinobacter aquaeolei)).